The chain runs to 260 residues: Shikimate dehydrogenase (NADP(+)) (260 aa).

Shikimate contacts are provided by residues 14 to 16 and Thr-60; that span reads SAS. The active-site Proton acceptor is Lys-64. Residues Asn-85 and Asp-100 each contribute to the shikimate site. NADP(+) contacts are provided by residues 121–125, 145–150, and Phe-201; these read GAGGA and NRTYER. Tyr-203 contributes to the shikimate binding site. NADP(+) is bound at residue Gly-225.

Belongs to the shikimate dehydrogenase family. As to quaternary structure, homodimer.

It carries out the reaction shikimate + NADP(+) = 3-dehydroshikimate + NADPH + H(+). Its pathway is metabolic intermediate biosynthesis; chorismate biosynthesis; chorismate from D-erythrose 4-phosphate and phosphoenolpyruvate: step 4/7. Involved in the biosynthesis of the chorismate, which leads to the biosynthesis of aromatic amino acids. Catalyzes the reversible NADPH linked reduction of 3-dehydroshikimate (DHSA) to yield shikimate (SA). The sequence is that of Shikimate dehydrogenase (NADP(+)) from Pyrobaculum islandicum (strain DSM 4184 / JCM 9189 / GEO3).